The following is a 330-amino-acid chain: Inactive serine protease 45 (330 aa).

The N-terminal stretch at 1–35 (MATSLRLLDAGPGSLRRWIPTCFAALLLLPPRPNL) is a signal peptide. The Peptidase S1 domain occupies 45–291 (VCGAPWWSDS…YTGWIKEQVS (247 aa)). 4 disulfides stabilise this stretch: Cys-75-Cys-91, Cys-172-Cys-249, Cys-207-Cys-230, and Cys-239-Cys-267. N-linked (GlcNAc...) asparagine glycosylation occurs at Asn-272.

It belongs to the peptidase S1 family.

Its subcellular location is the secreted. This chain is Inactive serine protease 45 (Prss45), found in Rattus norvegicus (Rat).